The following is a 163-amino-acid chain: Probable ribosome biogenesis protein RLP24 (163 aa).

It belongs to the eukaryotic ribosomal protein eL24 family. Associated with nucleolar and cytoplasmic pre-60S particles. At the end of biogenesis it dissociates from cytoplasmic pre-60S particles and is likely to be exchanged for its ribosomal homolog, RPL24.

The protein localises to the nucleus. The protein resides in the nucleolus. Functionally, involved in the biogenesis of the 60S ribosomal subunit. Ensures the docking of GTPBP4/NOG1 to pre-60S particles. The polypeptide is Probable ribosome biogenesis protein RLP24 (RSL24D1) (Homo sapiens (Human)).